Consider the following 168-residue polypeptide: Mediator of RNA polymerase II transcription subunit 7b (168 aa).

Residues 1–12 (MATATYPPPPPY) show a composition bias toward pro residues. The tract at residues 1 to 33 (MATATYPPPPPYYRLYKDFSENTDSAPEPPPPI) is disordered. Coiled-coil stretches lie at residues 64 to 92 (KDSN…ADVL) and 132 to 162 (IMEL…KDAF).

The protein belongs to the Mediator complex subunit 7 family. Component of the Mediator complex. Interacts with MEE14/CBP1.

It is found in the nucleus. Its function is as follows. Component of the Mediator complex, a coactivator involved in the regulated transcription of nearly all RNA polymerase II-dependent genes. Mediator functions as a bridge to convey information from gene-specific regulatory proteins to the basal RNA polymerase II transcription machinery. The Mediator complex, having a compact conformation in its free form, is recruited to promoters by direct interactions with regulatory proteins and serves for the assembly of a functional pre-initiation complex with RNA polymerase II and the general transcription factors. The protein is Mediator of RNA polymerase II transcription subunit 7b (MED7B) of Arabidopsis thaliana (Mouse-ear cress).